The primary structure comprises 272 residues: L-aspartate dehydrogenase (272 aa).

The NAD(+) site is built by Ala125 and Asn192. His222 is an active-site residue.

It belongs to the L-aspartate dehydrogenase family.

The catalysed reaction is L-aspartate + NADP(+) + H2O = oxaloacetate + NH4(+) + NADPH + H(+). It catalyses the reaction L-aspartate + NAD(+) + H2O = oxaloacetate + NH4(+) + NADH + H(+). Its pathway is cofactor biosynthesis; NAD(+) biosynthesis; iminoaspartate from L-aspartate (dehydrogenase route): step 1/1. Specifically catalyzes the NAD or NADP-dependent dehydrogenation of L-aspartate to iminoaspartate. The protein is L-aspartate dehydrogenase of Nitrosopumilus maritimus (strain SCM1).